The sequence spans 136 residues: Small ribosomal subunit protein eS8 (136 aa).

It belongs to the eukaryotic ribosomal protein eS8 family. As to quaternary structure, part of the 30S ribosomal subunit.

This is Small ribosomal subunit protein eS8 (rps8e) from Aeropyrum pernix (strain ATCC 700893 / DSM 11879 / JCM 9820 / NBRC 100138 / K1).